Reading from the N-terminus, the 385-residue chain is Endoglucanase 1 (385 aa).

The first 17 residues, 1 to 17 (MKLVFSALASLLSGASA), serve as a signal peptide directing secretion. Asn-93 and Asn-140 each carry an N-linked (GlcNAc...) asparagine glycan. Catalysis depends on Glu-176, which acts as the Proton donor. N-linked (GlcNAc...) asparagine glycans are attached at residues Asn-200 and Asn-237. The Nucleophile role is filled by Glu-284. Residues Asn-289 and Asn-331 are each glycosylated (N-linked (GlcNAc...) asparagine).

The protein belongs to the glycosyl hydrolase 5 (cellulase A) family.

It catalyses the reaction Endohydrolysis of (1-&gt;4)-beta-D-glucosidic linkages in cellulose, lichenin and cereal beta-D-glucans.. It functions in the pathway glycan metabolism; cellulose degradation. Functionally, active towards carboxymethyl cellulose. The sequence is that of Endoglucanase 1 (eg 1) from Robillarda sp. (strain Y-20).